Consider the following 164-residue polypeptide: Transcription elongation factor GreA (164 aa).

A coiled-coil region spans residues 50 to 75 (YHAAREEQGQQEARIRQLQDLLNIAK).

Belongs to the GreA/GreB family.

Necessary for efficient RNA polymerase transcription elongation past template-encoded arresting sites. The arresting sites in DNA have the property of trapping a certain fraction of elongating RNA polymerases that pass through, resulting in locked ternary complexes. Cleavage of the nascent transcript by cleavage factors such as GreA or GreB allows the resumption of elongation from the new 3'terminus. GreA releases sequences of 2 to 3 nucleotides. The polypeptide is Transcription elongation factor GreA (Mycobacterium leprae (strain Br4923)).